The following is a 154-amino-acid chain: MGLSDGEWQLVLNAWGKVEADIPGHGQEVLIRLFKGHPETLEKFDKFKHLKSEDEMKASEDLKKHGATVLTALGNILKKKGNHEAELKPLAQSHATKHKISVQFLEFISEAIIQVIQSKHPGDFGGDAQAAMGKALELFRNDMAAKYKELGFQG.

The Globin domain occupies 2 to 148 (GLSDGEWQLV…FRNDMAAKYK (147 aa)). S4 carries the phosphoserine modification. H65 serves as a coordination point for nitrite. O2 is bound at residue H65. T68 bears the Phosphothreonine mark. Residue H94 participates in heme b binding.

It belongs to the globin family. As to quaternary structure, monomeric.

The protein localises to the cytoplasm. It localises to the sarcoplasm. It carries out the reaction Fe(III)-heme b-[protein] + nitric oxide + H2O = Fe(II)-heme b-[protein] + nitrite + 2 H(+). The enzyme catalyses H2O2 + AH2 = A + 2 H2O. Monomeric heme protein which primary function is to store oxygen and facilitate its diffusion within muscle tissues. Reversibly binds oxygen through a pentacoordinated heme iron and enables its timely and efficient release as needed during periods of heightened demand. Depending on the oxidative conditions of tissues and cells, and in addition to its ability to bind oxygen, it also has a nitrite reductase activity whereby it regulates the production of bioactive nitric oxide. Under stress conditions, like hypoxia and anoxia, it also protects cells against reactive oxygen species thanks to its pseudoperoxidase activity. The polypeptide is Myoglobin (MB) (Didelphis virginiana (North American opossum)).